A 543-amino-acid polypeptide reads, in one-letter code: Protein phosphatase 1G (543 aa).

Glycine 2 carries N-myristoyl glycine lipidation. Position 22 is an omega-N-methylarginine (arginine 22). Positions 26–503 (PYGFSAMQGW…DNMTCIIICF (478 aa)) constitute a PPM-type phosphatase domain. Mn(2+) contacts are provided by aspartate 60 and glycine 61. Disordered regions lie at residues 116–139 (QIAG…DVDN) and 163–326 (NCHK…SDSG). Threonine 122 bears the Phosphothreonine mark. A compositionally biased stretch (acidic residues) spans 123–139 (EDEDEKEKVADEDDVDN). A Phosphoserine modification is found at serine 183. The segment covering 259-310 (DSEDESDEAEEEEEDSEECSEEEDGYSSEEAENEEDEDDTEEAEEDDEEEEM) has biased composition (acidic residues). The residue at position 381 (lysine 381) is an N6-acetyllysine. The Mn(2+) site is built by aspartate 439 and aspartate 494. Residues 508-543 (TAAPQPESGKRKLEEVLSTEGAEENGNSDKKKAKRD) form a disordered region. Serine 525 is subject to Phosphoserine.

This sequence belongs to the PP2C family. Interacts with NOL3; may dephosphorylate NOL3. Mg(2+) serves as cofactor. Mn(2+) is required as a cofactor.

Its subcellular location is the cytoplasm. It localises to the membrane. The catalysed reaction is O-phospho-L-seryl-[protein] + H2O = L-seryl-[protein] + phosphate. It carries out the reaction O-phospho-L-threonyl-[protein] + H2O = L-threonyl-[protein] + phosphate. The sequence is that of Protein phosphatase 1G (PPM1G) from Bos taurus (Bovine).